The chain runs to 290 residues: 6-phospho-5-dehydro-2-deoxy-D-gluconate aldolase (290 aa).

Asp85 (proton donor) is an active-site residue. Zn(2+) contacts are provided by His86 and His180. Gly181 is a binding site for dihydroxyacetone phosphate. His208 serves as a coordination point for Zn(2+). Dihydroxyacetone phosphate is bound by residues 209-211 (GAS) and 230-233 (NINT). A Phosphothreonine modification is found at Thr233.

This sequence belongs to the class II fructose-bisphosphate aldolase family. IolJ subfamily. The cofactor is Zn(2+).

The enzyme catalyses 6-phospho-5-dehydro-2-deoxy-D-gluconate = 3-oxopropanoate + dihydroxyacetone phosphate. It participates in polyol metabolism; myo-inositol degradation into acetyl-CoA; acetyl-CoA from myo-inositol: step 6/7. Functionally, produces dihydroxyacetone phosphate (DHAP or glycerone phosphate) and malonic semialdehyde (MSA or 3-oxopropanoate) from 6-phospho-5-dehydro-2-deoxy-D-gluconate (DKGP). The polypeptide is 6-phospho-5-dehydro-2-deoxy-D-gluconate aldolase (iolJ) (Bacillus velezensis (strain DSM 23117 / BGSC 10A6 / LMG 26770 / FZB42) (Bacillus amyloliquefaciens subsp. plantarum)).